The primary structure comprises 396 residues: UDP-galactose translocator (396 aa).

Helical transmembrane passes span 3 to 23 (AVGA…AGAL), 37 to 57 (YISL…IRYA), 65 to 85 (FFAT…CLLL), 97 to 117 (LVLF…KLAV), 140 to 160 (TFQV…VLML), 169 to 189 (WASL…QAGG), 200 to 220 (GAGL…GVYF), 238 to 258 (LGLF…GTAV), 269 to 289 (PAVW…AVVV), and 315 to 335 (LFGF…IGAV). Positions 358–379 (PCVHQQPPGQPPPPQLSSHRGD) are disordered. Residues 392–396 (KVKGS) carry the ER retention motif motif.

This sequence belongs to the nucleotide-sugar transporter family. SLC35A subfamily. Interacts with SLC35A3; the interaction is reduced in the presence of SLC35A4. Found in a complex with SLC35A3 and SLC35A4. As to quaternary structure, interacts with B4GALT4.

It is found in the endoplasmic reticulum membrane. Its subcellular location is the golgi apparatus membrane. The enzyme catalyses UMP(out) + UDP-alpha-D-galactose(in) = UMP(in) + UDP-alpha-D-galactose(out). It catalyses the reaction UDP-N-acetyl-alpha-D-galactosamine(in) + UMP(out) = UDP-N-acetyl-alpha-D-galactosamine(out) + UMP(in). It carries out the reaction UMP(out) + UDP-alpha-D-glucose(in) = UMP(in) + UDP-alpha-D-glucose(out). The catalysed reaction is UMP(out) + UDP-N-acetyl-alpha-D-glucosamine(in) = UMP(in) + UDP-N-acetyl-alpha-D-glucosamine(out). The enzyme catalyses UDP-alpha-D-galactose(in) + AMP(out) = UDP-alpha-D-galactose(out) + AMP(in). It catalyses the reaction UDP-alpha-D-galactose(in) + CMP(out) = UDP-alpha-D-galactose(out) + CMP(in). It carries out the reaction UDP-N-acetyl-alpha-D-galactosamine(out) + UDP-alpha-D-galactose(in) = UDP-N-acetyl-alpha-D-galactosamine(in) + UDP-alpha-D-galactose(out). The catalysed reaction is UDP-N-acetyl-alpha-D-glucosamine(out) + UDP-alpha-D-galactose(in) = UDP-N-acetyl-alpha-D-glucosamine(in) + UDP-alpha-D-galactose(out). The enzyme catalyses UDP-alpha-D-galactose(in) + UDP-alpha-D-glucose(out) = UDP-alpha-D-galactose(out) + UDP-alpha-D-glucose(in). It catalyses the reaction UMP(out) + CMP(in) = UMP(in) + CMP(out). It carries out the reaction UMP(out) + AMP(in) = UMP(in) + AMP(out). Transports uridine diphosphate galactose (UDP-galactose) from the cytosol into the Golgi apparatus, functioning as an antiporter that exchanges UDP-galactose for UMP. It is also able to exchange UDP-galactose for AMP and CMP, and to transport UDP-N-acetylgalactosamine (UDP-GalNAc) and other nucleotide sugars. As a provider of UDP-galactose to galactosyltransferases present in the Golgi apparatus, it is necessary for globotriaosylceramide/globoside (Gb3Cer) synthesis from lactosylceramide. The protein is UDP-galactose translocator of Homo sapiens (Human).